We begin with the raw amino-acid sequence, 443 residues long: ATP-dependent protease ATPase subunit HslU (443 aa).

ATP is bound by residues isoleucine 18 and 60 to 65 (GVGKTE). Residues 137 to 156 (PPPRDAWGQNEQSEDTSNTR) are disordered. Positions 145-156 (QNEQSEDTSNTR) are enriched in polar residues. 3 residues coordinate ATP: aspartate 256, glutamate 321, and arginine 393.

Belongs to the ClpX chaperone family. HslU subfamily. As to quaternary structure, a double ring-shaped homohexamer of HslV is capped on each side by a ring-shaped HslU homohexamer. The assembly of the HslU/HslV complex is dependent on binding of ATP.

It localises to the cytoplasm. Its function is as follows. ATPase subunit of a proteasome-like degradation complex; this subunit has chaperone activity. The binding of ATP and its subsequent hydrolysis by HslU are essential for unfolding of protein substrates subsequently hydrolyzed by HslV. HslU recognizes the N-terminal part of its protein substrates and unfolds these before they are guided to HslV for hydrolysis. This is ATP-dependent protease ATPase subunit HslU from Vibrio vulnificus (strain YJ016).